We begin with the raw amino-acid sequence, 525 residues long: Squalene epoxidase 3 (525 aa).

A helical transmembrane segment spans residues 9-29 (HCILTTTFVASLFAFLLLYVL). Residues 64-65 (VA), 84-85 (ER), Arg92, Arg163, Val179, Asp341, and Met354 each bind FAD. 2 helical membrane passes run 452–472 (LVLH…VPLP) and 477–497 (LWLG…IIKA).

The protein belongs to the squalene monooxygenase family. FAD is required as a cofactor. As to expression, expressed in seedlings, leaves, stems, inflorescences and siliques.

It is found in the membrane. The enzyme catalyses squalene + reduced [NADPH--hemoprotein reductase] + O2 = (S)-2,3-epoxysqualene + oxidized [NADPH--hemoprotein reductase] + H2O + H(+). The protein operates within terpene metabolism; lanosterol biosynthesis; lanosterol from farnesyl diphosphate: step 2/3. In terms of biological role, catalyzes the stereospecific oxidation of squalene to (S)-2,3-epoxysqualene, and is considered to be a rate-limiting enzyme in steroid biosynthesis. Can produce not only oxidosqualene, but also 2,3:22,23-dioxidosqualene. In Arabidopsis thaliana (Mouse-ear cress), this protein is Squalene epoxidase 3 (SQE3).